Reading from the N-terminus, the 108-residue chain is Thioredoxin (108 aa).

Residues 2–108 (NKIIELTDQN…LKDFLDENIK (107 aa)) form the Thioredoxin domain. A disulfide bridge links C32 with C35.

Belongs to the thioredoxin family.

Functionally, participates in various redox reactions through the reversible oxidation of its active center dithiol to a disulfide and catalyzes dithiol-disulfide exchange reactions. The sequence is that of Thioredoxin (trxA) from Buchnera aphidicola subsp. Schizaphis graminum (strain Sg).